The following is a 114-amino-acid chain: Progonadoliberin-2 (114 aa).

Positions 1 to 25 (MASSMLGFLLLLLLLMAAHPGPSEA) are cleaved as a signal peptide. The interval 22–80 (PSEAQHWSHGWYPGGKRASNSPQDPQSALRPPAPSAAQTAHSFRSAALASPEDSVPWEG) is disordered. A Glycine amide modification is found at G35.

It belongs to the GnRH family. Midbrain.

The protein resides in the secreted. Its function is as follows. Stimulates the secretion of gonadotropins; it stimulates the secretion of both luteinizing and follicle-stimulating hormones. The chain is Progonadoliberin-2 (GNRH2) from Tupaia belangeri (Common tree shrew).